We begin with the raw amino-acid sequence, 58 residues long: uncharacterized protein (58 aa).

This is an uncharacterized protein from Enterobacteria phage T4 (Bacteriophage T4).